Reading from the N-terminus, the 164-residue chain is Protein HIT1 (164 aa).

Positions 8, 11, 28, and 32 each coordinate Zn(2+). The HIT-type; degenerate zinc-finger motif lies at 8 to 49 (CGICRGVDGKYKCPKCGVRYCSLKCYKDAAKHVHKESEQPRA).

The protein is Protein HIT1 (HIT1) of Saccharomyces cerevisiae (strain ATCC 204508 / S288c) (Baker's yeast).